Consider the following 482-residue polypeptide: Exodeoxyribonuclease 7 large subunit (482 aa).

A disordered region spans residues 457–482; the sequence is TLDTGGAPAKPASKPKQKPPEQGSLF.

This sequence belongs to the XseA family. As to quaternary structure, heterooligomer composed of large and small subunits.

Its subcellular location is the cytoplasm. The catalysed reaction is Exonucleolytic cleavage in either 5'- to 3'- or 3'- to 5'-direction to yield nucleoside 5'-phosphates.. In terms of biological role, bidirectionally degrades single-stranded DNA into large acid-insoluble oligonucleotides, which are then degraded further into small acid-soluble oligonucleotides. The protein is Exodeoxyribonuclease 7 large subunit of Ruegeria pomeroyi (strain ATCC 700808 / DSM 15171 / DSS-3) (Silicibacter pomeroyi).